Here is a 334-residue protein sequence, read N- to C-terminus: Protein-methionine-sulfoxide reductase catalytic subunit MsrP (334 aa).

Residues 1 to 44 (MKKNQFLKESDVTAESVFFMKRRQVLKALGISAAALSLPHAAHA) constitute a signal peptide (tat-type signal). Mo-molybdopterin-binding positions include Asn-88, 91–92 (YE), Cys-146, Thr-181, Asn-233, Arg-238, and 249–251 (GIK).

Belongs to the MsrP family. In terms of assembly, heterodimer of a catalytic subunit (MsrP) and a heme-binding subunit (MsrQ). Mo-molybdopterin serves as cofactor. Predicted to be exported by the Tat system. The position of the signal peptide cleavage has not been experimentally proven.

It localises to the periplasm. The catalysed reaction is L-methionyl-[protein] + a quinone + H2O = L-methionyl-(S)-S-oxide-[protein] + a quinol. It catalyses the reaction L-methionyl-[protein] + a quinone + H2O = L-methionyl-(R)-S-oxide-[protein] + a quinol. Its function is as follows. Part of the MsrPQ system that repairs oxidized periplasmic proteins containing methionine sulfoxide residues (Met-O), using respiratory chain electrons. Thus protects these proteins from oxidative-stress damage caused by reactive species of oxygen and chlorine generated by the host defense mechanisms. MsrPQ is essential for the maintenance of envelope integrity under bleach stress, rescuing a wide series of structurally unrelated periplasmic proteins from methionine oxidation, including the primary periplasmic chaperone SurA and the lipoprotein Pal. The catalytic subunit MsrP is non-stereospecific, being able to reduce both (R-) and (S-) diastereoisomers of methionine sulfoxide. The polypeptide is Protein-methionine-sulfoxide reductase catalytic subunit MsrP (Escherichia coli O127:H6 (strain E2348/69 / EPEC)).